The primary structure comprises 395 residues: Elongation factor Tu (395 aa).

Positions 10–204 (KPHVNIGTIG…EVDAYIPTPE (195 aa)) constitute a tr-type G domain. Positions 19–26 (GHVDHGKT) are G1. 19-26 (GHVDHGKT) contributes to the GTP binding site. Residue T26 coordinates Mg(2+). The interval 60–64 (GITIS) is G2. A G3 region spans residues 81–84 (DCPG). Residues 81–85 (DCPGH) and 136–139 (NKCD) each bind GTP. The interval 136-139 (NKCD) is G4. The segment at 174 to 176 (SAL) is G5.

The protein belongs to the TRAFAC class translation factor GTPase superfamily. Classic translation factor GTPase family. EF-Tu/EF-1A subfamily. As to quaternary structure, monomer.

It is found in the cytoplasm. It catalyses the reaction GTP + H2O = GDP + phosphate + H(+). In terms of biological role, GTP hydrolase that promotes the GTP-dependent binding of aminoacyl-tRNA to the A-site of ribosomes during protein biosynthesis. This is Elongation factor Tu from Bacillus cereus (strain ATCC 10987 / NRS 248).